Reading from the N-terminus, the 230-residue chain is DNA polymerase III subunit epsilon (230 aa).

Positions 10 and 12 each coordinate a divalent metal cation. 4 residues coordinate substrate: D10, E12, E55, and H60. The active-site Proton acceptor is H156. A divalent metal cation is bound at residue D161. A substrate-binding site is contributed by D161.

As to quaternary structure, DNA polymerase III contains a core (composed of alpha, epsilon and theta chains) that associates with a tau subunit. This core dimerizes to form the POLIII' complex. PolIII' associates with the gamma complex (composed of gamma, delta, delta', psi and chi chains) and with the beta chain to form the complete DNA polymerase III complex. It depends on Mg(2+) as a cofactor. The cofactor is Mn(2+).

The enzyme catalyses DNA(n) + a 2'-deoxyribonucleoside 5'-triphosphate = DNA(n+1) + diphosphate. DNA polymerase III is a complex, multichain enzyme responsible for most of the replicative synthesis in bacteria. The epsilon subunit contain the editing function and is a proofreading 3'-5' exonuclease. This is DNA polymerase III subunit epsilon (dnaQ) from Rickettsia conorii (strain ATCC VR-613 / Malish 7).